The primary structure comprises 190 residues: RNA pyrophosphohydrolase (190 aa).

A Nudix hydrolase domain is found at 6 to 149; the sequence is GYRPNVGIVL…KRSVYARALC (144 aa). Residues 38–59 carry the Nudix box motif; that stretch reads GGMHSDETPVEAMYRELNEETG.

This sequence belongs to the Nudix hydrolase family. RppH subfamily. A divalent metal cation is required as a cofactor.

Functionally, accelerates the degradation of transcripts by removing pyrophosphate from the 5'-end of triphosphorylated RNA, leading to a more labile monophosphorylated state that can stimulate subsequent ribonuclease cleavage. This Xylella fastidiosa (strain Temecula1 / ATCC 700964) protein is RNA pyrophosphohydrolase.